Consider the following 158-residue polypeptide: 6,7-dimethyl-8-ribityllumazine synthase (158 aa).

Residues phenylalanine 22, 57–59, and 81–83 contribute to the 5-amino-6-(D-ribitylamino)uracil site; these read AVE and AVI. Position 86 to 87 (86 to 87) interacts with (2S)-2-hydroxy-3-oxobutyl phosphate; that stretch reads GT. Histidine 89 functions as the Proton donor in the catalytic mechanism. Phenylalanine 114 serves as a coordination point for 5-amino-6-(D-ribitylamino)uracil. Arginine 128 is a binding site for (2S)-2-hydroxy-3-oxobutyl phosphate.

Belongs to the DMRL synthase family. In terms of assembly, forms an icosahedral capsid composed of 60 subunits, arranged as a dodecamer of pentamers.

The enzyme catalyses (2S)-2-hydroxy-3-oxobutyl phosphate + 5-amino-6-(D-ribitylamino)uracil = 6,7-dimethyl-8-(1-D-ribityl)lumazine + phosphate + 2 H2O + H(+). The protein operates within cofactor biosynthesis; riboflavin biosynthesis; riboflavin from 2-hydroxy-3-oxobutyl phosphate and 5-amino-6-(D-ribitylamino)uracil: step 1/2. Its function is as follows. Catalyzes the formation of 6,7-dimethyl-8-ribityllumazine by condensation of 5-amino-6-(D-ribitylamino)uracil with 3,4-dihydroxy-2-butanone 4-phosphate. This is the penultimate step in the biosynthesis of riboflavin. This Shewanella loihica (strain ATCC BAA-1088 / PV-4) protein is 6,7-dimethyl-8-ribityllumazine synthase.